Here is a 294-residue protein sequence, read N- to C-terminus: rRNA 2'-O-methyltransferase fibrillarin (294 aa).

The disordered stretch occupies residues 1–62 (MGKDFKSGGG…GKFGAKGPRG (62 aa)). The segment covering 20 to 56 (GPGGPGGRPFNKGPGGPGGPGGKFGGGRPGGPGGKFG) has biased composition (gly residues). 3 positions are modified to asymmetric dimethylarginine: R27, R47, and R61. S-adenosyl-L-methionine contacts are provided by residues 151-152 (TT), 170-171 (EF), 195-196 (DA), and 215-218 (DVAQ).

It belongs to the methyltransferase superfamily. Fibrillarin family. In terms of assembly, component of box C/D small nucleolar ribonucleoprotein (snoRNP) particles. It is associated with the U3, U8 and U13 small nuclear RNAs. By homology to other fibrillarins, some or all of the N-terminal domain arginines are modified to asymmetric dimethylarginine (DMA).

It localises to the nucleus. Its subcellular location is the nucleolus. It carries out the reaction L-glutaminyl-[histone H2A] + S-adenosyl-L-methionine = N(5)-methyl-L-glutaminyl-[histone H2A] + S-adenosyl-L-homocysteine + H(+). In terms of biological role, S-adenosyl-L-methionine-dependent methyltransferase that has the ability to methylate both RNAs and proteins. Involved in pre-rRNA processing. Utilizes the methyl donor S-adenosyl-L-methionine to catalyze the site-specific 2'-hydroxyl methylation of ribose moieties in pre-ribosomal RNA. Site specificity is provided by a guide RNA that base pairs with the substrate. Methylation occurs at a characteristic distance from the sequence involved in base pairing with the guide RNA. Also acts as a protein methyltransferase by mediating methylation of 'Gln-105' of histone H2A (H2AQ105me), a modification that impairs binding of the FACT complex and is specifically present at 35S ribosomal DNA locus. This chain is rRNA 2'-O-methyltransferase fibrillarin (FIB), found in Tetrahymena thermophila.